Consider the following 209-residue polypeptide: Uracil phosphoribosyltransferase (209 aa).

Residues Arg79, Arg104, and 131–139 each bind 5-phospho-alpha-D-ribose 1-diphosphate; that span reads DPMLATGGS. Residues Ile194 and 199–201 contribute to the uracil site; that span reads GDA. A 5-phospho-alpha-D-ribose 1-diphosphate-binding site is contributed by Asp200.

This sequence belongs to the UPRTase family. It depends on Mg(2+) as a cofactor.

It catalyses the reaction UMP + diphosphate = 5-phospho-alpha-D-ribose 1-diphosphate + uracil. It participates in pyrimidine metabolism; UMP biosynthesis via salvage pathway; UMP from uracil: step 1/1. Allosterically activated by GTP. In terms of biological role, catalyzes the conversion of uracil and 5-phospho-alpha-D-ribose 1-diphosphate (PRPP) to UMP and diphosphate. The protein is Uracil phosphoribosyltransferase of Listeria monocytogenes serovar 1/2a (strain ATCC BAA-679 / EGD-e).